The sequence spans 254 residues: Autophagy-related protein 5 (254 aa).

Residue Lys102 forms a Glycyl lysine isopeptide (Lys-Gly) (interchain with G-Cter in ATG12) linkage.

Belongs to the ATG5 family. In terms of assembly, conjugated with ATG12. The ATG5-ATG12 conjugate forms a complex with several units of ATG16. The ATG12-ATG5 conjugate also associates with ATG3. In terms of processing, conjugated to ATG12; which is essential for autophagy. Conjugation with ATG12 involves ATG7 as an E1-like activating enzyme and ATG10 as an E2-like conjugating enzyme.

The protein resides in the preautophagosomal structure membrane. Involved in cytoplasm to vacuole transport (Cvt) and autophagic vesicle formation. Autophagy is essential for maintenance of amino acid levels and protein synthesis under nitrogen starvation. Required for selective autophagic degradation of the nucleus (nucleophagy). Also required for mitophagy, which eliminates defective or superfluous mitochondria in order to fulfill cellular energy requirements and prevent excess ROS production. Conjugation with ATG12, through a ubiquitin-like conjugating system involving ATG7 as an E1-like activating enzyme and ATG10 as an E2-like conjugating enzyme, is essential for its function. The ATG12-ATG5 conjugate acts as an E3-like enzyme which is required for lipidation of ATG8 and ATG8 association to the vesicle membranes. ATG12-ATG5 rearranges the ATG3 catalytic center and enhances its E2 activity. Autophagy is required for proper vegetative growth, asexual/sexual reproduction, and full virulence. Autophagy is particularly involved in the biosynthesis of deoxynivalenol (DON), an important virulence determinant. The sequence is that of Autophagy-related protein 5 from Gibberella zeae (strain ATCC MYA-4620 / CBS 123657 / FGSC 9075 / NRRL 31084 / PH-1) (Wheat head blight fungus).